The following is a 361-amino-acid chain: Trans-2,3-enoyl-CoA reductase-like (361 aa).

Residues serine 33 and serine 35 each carry the phosphoserine modification. 4 helical membrane passes run 139-159 (VGWTTVFLAEYSGPLLIYLLF), 181-201 (VHLAFFCHCIHYIRLLLETLF), 215-235 (LIKGCAFYWGFTSWMAYYINH), and 309-329 (ISFTVMTQTLPVGIFTILMTI).

Belongs to the steroid 5-alpha reductase family. As to expression, expression is highest in the heart with very low to almost undetectable levels in brain, skeletal muscle, stomach, pancreas, liver, kidney, small intestine, and uterus.

The protein localises to the membrane. The protein resides in the endoplasmic reticulum. This chain is Trans-2,3-enoyl-CoA reductase-like (Tecrl), found in Mus musculus (Mouse).